We begin with the raw amino-acid sequence, 237 residues long: Ribosomal RNA small subunit methyltransferase G (237 aa).

S-adenosyl-L-methionine contacts are provided by residues Gly-78, Phe-83, 129–130 (AE), and Arg-148. A disordered region spans residues 216–237 (SKKKETPNKYPRKAGTPNKKPL).

This sequence belongs to the methyltransferase superfamily. RNA methyltransferase RsmG family.

Its subcellular location is the cytoplasm. Its function is as follows. Specifically methylates the N7 position of a guanine in 16S rRNA. This Streptococcus agalactiae serotype Ia (strain ATCC 27591 / A909 / CDC SS700) protein is Ribosomal RNA small subunit methyltransferase G.